The primary structure comprises 91 residues: Small integral membrane protein 12 (91 aa).

The chain crosses the membrane as a helical span at residues 12–34 (YAPYVTFPVAFVVGAVGYHLEWF).

Belongs to the SMIM12 family.

It localises to the membrane. The polypeptide is Small integral membrane protein 12 (smim12) (Danio rerio (Zebrafish)).